Here is a 284-residue protein sequence, read N- to C-terminus: L-ribulose-5-phosphate 3-epimerase UlaE (284 aa).

It belongs to the L-ribulose-5-phosphate 3-epimerase family.

It carries out the reaction L-ribulose 5-phosphate = L-xylulose 5-phosphate. The protein operates within cofactor degradation; L-ascorbate degradation; D-xylulose 5-phosphate from L-ascorbate: step 3/4. Catalyzes the isomerization of L-xylulose-5-phosphate to L-ribulose-5-phosphate. Is involved in the anaerobic L-ascorbate utilization. The polypeptide is L-ribulose-5-phosphate 3-epimerase UlaE (Shigella boydii serotype 18 (strain CDC 3083-94 / BS512)).